The primary structure comprises 238 residues: Protein-lysine N-methyltransferase efm4 (238 aa).

This sequence belongs to the class I-like SAM-binding methyltransferase superfamily. EFM4 family.

The protein localises to the cytoplasm. The protein resides in the nucleus. Its function is as follows. S-adenosyl-L-methionine-dependent protein-lysine N-methyltransferase that mono- and dimethylates elongation factor 1-alpha at 'Lys-316'. May play a role in intracellular transport. The protein is Protein-lysine N-methyltransferase efm4 of Schizosaccharomyces pombe (strain 972 / ATCC 24843) (Fission yeast).